A 427-amino-acid chain; its full sequence is Trigger factor (427 aa).

One can recognise a PPIase FKBP-type domain in the interval 163–248; the sequence is GDTVVIDFVG…IHEVKEKEVP (86 aa).

This sequence belongs to the FKBP-type PPIase family. Tig subfamily.

The protein resides in the cytoplasm. The catalysed reaction is [protein]-peptidylproline (omega=180) = [protein]-peptidylproline (omega=0). Its function is as follows. Involved in protein export. Acts as a chaperone by maintaining the newly synthesized protein in an open conformation. Functions as a peptidyl-prolyl cis-trans isomerase. The protein is Trigger factor of Streptococcus sanguinis (strain SK36).